The primary structure comprises 598 residues: Phospholipase B-like protein G (598 aa).

The N-terminal stretch at 1-24 (MIKSYYLFFIILIFLIFINNFILC) is a signal peptide. N-linked (GlcNAc...) asparagine glycans are attached at residues N50, N98, N173, N341, N368, N450, N480, N526, and N576.

The protein belongs to the phospholipase B-like family.

Its subcellular location is the secreted. Probable phospholipase. The protein is Phospholipase B-like protein G (plbG) of Dictyostelium discoideum (Social amoeba).